The chain runs to 463 residues: Flotillin-like protein 2 (463 aa).

A lipid anchor (S-palmitoyl cysteine) is attached at Cys-35. The stretch at Glu-305 to Glu-354 forms a coiled coil.

This sequence belongs to the band 7/mec-2 family. Flotillin subfamily. Post-translationally, may be palmitoylated.

The protein resides in the cell membrane. It is found in the membrane. The protein localises to the caveola. Functionally, may act as a scaffolding protein within caveolar membranes, functionally participating in formation of caveolae or caveolae-like vesicles. This Arabidopsis thaliana (Mouse-ear cress) protein is Flotillin-like protein 2 (FLOT2).